The chain runs to 345 residues: S-adenosylmethionine:tRNA ribosyltransferase-isomerase (345 aa).

The protein belongs to the QueA family. As to quaternary structure, monomer.

It localises to the cytoplasm. The enzyme catalyses 7-aminomethyl-7-carbaguanosine(34) in tRNA + S-adenosyl-L-methionine = epoxyqueuosine(34) in tRNA + adenine + L-methionine + 2 H(+). Its pathway is tRNA modification; tRNA-queuosine biosynthesis. Functionally, transfers and isomerizes the ribose moiety from AdoMet to the 7-aminomethyl group of 7-deazaguanine (preQ1-tRNA) to give epoxyqueuosine (oQ-tRNA). The sequence is that of S-adenosylmethionine:tRNA ribosyltransferase-isomerase from Shewanella baltica (strain OS155 / ATCC BAA-1091).